We begin with the raw amino-acid sequence, 790 residues long: Potassium transporter 22 (790 aa).

The Cytoplasmic segment spans residues 1 to 64 (MAQQQGQGAG…HGEGWARTLR (64 aa)). Residues 65-85 (LAFQCFGVLYGDIGTSPLYVY) form a helical membrane-spanning segment. Over 86 to 98 (STTFDGGIRHTDD) the chain is Extracellular. A helical transmembrane segment spans residues 99–119 (LLGVLSLIIYSFLLFTIIKYV). Residues 120–198 (YIALRANDDG…DLLENSRPVR (79 aa)) are Cytoplasmic-facing. A helical transmembrane segment spans residues 199–219 (ISLFLLTILATAMVISDACLT). The Extracellular portion of the chain corresponds to 220-236 (PAISVLSAVGGLKDKAP). Residues 237 to 257 (HLNTEQVVWVTVGILVMLFAV) traverse the membrane as a helical segment. The Cytoplasmic portion of the chain corresponds to 258–264 (QRFGTDK). A helical transmembrane segment spans residues 265 to 285 (VGYLFAPVVLLWLLLIGGVGV). At 286–318 (YNLAAHDVGVLRAFNPKYILDYFRRNGRHGWVS) the chain is on the extracellular side. The chain crosses the membrane as a helical span at residues 319-339 (LGGVLLCFTGTEALFADLGCF). Over 340–345 (SIRSIQ) the chain is Cytoplasmic. A helical membrane pass occupies residues 346-366 (LSFAFGLVPAVLLAYAGQAAY). The Extracellular portion of the chain corresponds to 367 to 385 (LRVYPDHVGDAFYASTPQV). Residues 386–406 (LFWPTLVLALAASVVGSQAMI) traverse the membrane as a helical segment. Over 407-437 (SCAFATISHSQAMGCFPRVKVVHTSRQYQGQ) the chain is Cytoplasmic. The chain crosses the membrane as a helical span at residues 438–458 (VYIPEINLLLGAAACVVTVAA). The Extracellular portion of the chain corresponds to 459–469 (RDTVVIGEAHG). Residues 470-490 (ICVVLVMLITTLLLTVVMVLV) traverse the membrane as a helical segment. Topologically, residues 491 to 492 (WR) are cytoplasmic. A helical transmembrane segment spans residues 493 to 513 (VNIGWVLVFACVFASTESVYL). Topologically, residues 514–519 (TSVLYK) are extracellular. A helical membrane pass occupies residues 520–540 (FAHGGYIPVAMSAVLMGVMGV). Residues 541-790 (WHYVHVRRYK…LLKVGMSYEI (250 aa)) are Cytoplasmic-facing.

This sequence belongs to the HAK/KUP transporter (TC 2.A.72.3) family.

It is found in the membrane. In terms of biological role, high-affinity potassium transporter. The protein is Potassium transporter 22 (HAK22) of Oryza sativa subsp. japonica (Rice).